The primary structure comprises 89 residues: Small ribosomal subunit protein uS15 (89 aa).

The span at 1–21 (MALTTEEKKQVLSEYGLHETD) shows a compositional bias: basic and acidic residues. Residues 1-24 (MALTTEEKKQVLSEYGLHETDTGS) are disordered.

The protein belongs to the universal ribosomal protein uS15 family. In terms of assembly, part of the 30S ribosomal subunit. Forms a bridge to the 50S subunit in the 70S ribosome, contacting the 23S rRNA.

One of the primary rRNA binding proteins, it binds directly to 16S rRNA where it helps nucleate assembly of the platform of the 30S subunit by binding and bridging several RNA helices of the 16S rRNA. In terms of biological role, forms an intersubunit bridge (bridge B4) with the 23S rRNA of the 50S subunit in the ribosome. The chain is Small ribosomal subunit protein uS15 from Rhodococcus opacus (strain B4).